Here is a 99-residue protein sequence, read N- to C-terminus: Large ribosomal subunit protein uL23 (99 aa).

This sequence belongs to the universal ribosomal protein uL23 family. In terms of assembly, part of the 50S ribosomal subunit. Contacts protein L29, and trigger factor when it is bound to the ribosome.

Its function is as follows. One of the early assembly proteins it binds 23S rRNA. One of the proteins that surrounds the polypeptide exit tunnel on the outside of the ribosome. Forms the main docking site for trigger factor binding to the ribosome. This is Large ribosomal subunit protein uL23 from Lachnoclostridium phytofermentans (strain ATCC 700394 / DSM 18823 / ISDg) (Clostridium phytofermentans).